Consider the following 175-residue polypeptide: MTTIVSVRRKGQVVVGGDGQVSLGNTVMKGNARKVRRLYNGKVLAGFAGGTADAFTLFELFERKLEMHQGHLLKSAVELAKDWRTDRALRKLEAMLIVADEKESLIITGIGDVVQPEEDQILAIGSGGNYALSAARALVENTELSAHEIVEKSLRIAGDICVFTNTNFTIEELPN.

The active site involves T2. 3 residues coordinate Na(+): G158, C161, and T164.

It belongs to the peptidase T1B family. HslV subfamily. A double ring-shaped homohexamer of HslV is capped on each side by a ring-shaped HslU homohexamer. The assembly of the HslU/HslV complex is dependent on binding of ATP.

It is found in the cytoplasm. It catalyses the reaction ATP-dependent cleavage of peptide bonds with broad specificity.. Allosterically activated by HslU binding. Functionally, protease subunit of a proteasome-like degradation complex believed to be a general protein degrading machinery. This chain is ATP-dependent protease subunit HslV, found in Haemophilus influenzae (strain PittEE).